Reading from the N-terminus, the 513-residue chain is Butyrophilin subfamily 3 member A1 (513 aa).

An N-terminal signal peptide occupies residues 1–29 (MKMASFLAFLLLNFRVCLLLLQLLMPHSA). Ig-like V-type domains follow at residues 30-139 (QFSV…KALV) and 145-236 (ALGS…ASIS). The Extracellular segment spans residues 30–254 (QFSVLGPSGP…AQRWIAALAG (225 aa)). Intrachain disulfides connect Cys-52–Cys-126 and Cys-166–Cys-220. A glycan (N-linked (GlcNAc...) asparagine) is linked at Asn-115. Residues 255-271 (TLPVLLLLLGGAGYFLW) form a helical membrane-spanning segment. At 272-513 (QQQEEKKTQF…EPTALTICPA (242 aa)) the chain is on the cytoplasmic side. The 192-residue stretch at 322 to 513 (RGERHSAYNE…EPTALTICPA (192 aa)) folds into the B30.2/SPRY domain.

This sequence belongs to the immunoglobulin superfamily. BTN/MOG family. Homodimer. In terms of processing, N-glycosylated. As to expression, detected on T-cells, natural killer cells, dendritic cells and macrophages (at protein level). Ubiquitous. Highly expressed in heart, pancreas and lung, Moderately expressed in placenta, liver and muscle.

The protein resides in the cell membrane. Functionally, plays a role in T-cell activation and in the adaptive immune response. Regulates the proliferation of activated T-cells. Regulates the release of cytokines and IFNG by activated T-cells. Mediates the response of T-cells toward infected and transformed cells that are characterized by high levels of phosphorylated metabolites, such as isopentenyl pyrophosphate. The protein is Butyrophilin subfamily 3 member A1 (BTN3A1) of Homo sapiens (Human).